The primary structure comprises 139 residues: Small ribosomal subunit protein uS12 (139 aa).

Residues 1 to 21 form a disordered region; it reads MSTVSQLIKKRRSSKTSKTKA. Positions 8–18 are enriched in basic residues; it reads IKKRRSSKTSK. Asp-102 is subject to 3-methylthioaspartic acid.

The protein belongs to the universal ribosomal protein uS12 family. In terms of assembly, part of the 30S ribosomal subunit. Contacts proteins S8 and S17. May interact with IF1 in the 30S initiation complex.

In terms of biological role, with S4 and S5 plays an important role in translational accuracy. Functionally, interacts with and stabilizes bases of the 16S rRNA that are involved in tRNA selection in the A site and with the mRNA backbone. Located at the interface of the 30S and 50S subunits, it traverses the body of the 30S subunit contacting proteins on the other side and probably holding the rRNA structure together. The combined cluster of proteins S8, S12 and S17 appears to hold together the shoulder and platform of the 30S subunit. In Aster yellows witches'-broom phytoplasma (strain AYWB), this protein is Small ribosomal subunit protein uS12.